The chain runs to 713 residues: Probable muscarinic acetylcholine receptor gar-1 (713 aa).

Topologically, residues 1–20 are extracellular; that stretch reads MPNYTVPPDPADTSWDSPYS. An N-linked (GlcNAc...) asparagine glycan is attached at Asn3. The chain crosses the membrane as a helical span at residues 21–41; that stretch reads IPVQIVVWIIIIVLSLETIIG. Residues 42–66 lie on the Cytoplasmic side of the membrane; the sequence is NAMVVMAYRIERNISKQVSNRYIVS. A helical transmembrane segment spans residues 67 to 87; that stretch reads LAISDLIIGIEGFPFFTVYVL. Over 88 to 101 the chain is Extracellular; the sequence is NGDRWPLGWVACQT. Cys99 and Cys180 are oxidised to a cystine. Residues 102–122 traverse the membrane as a helical segment; that stretch reads WLFLDYTLCLVSILTVLLITA. The Cytoplasmic segment spans residues 123–144; the sequence is DRYLSVCHTAKYLKWQSPTKTQ. A helical membrane pass occupies residues 145 to 165; that stretch reads LLIVMSWLLPAIIFGIMIYGW. Topologically, residues 166–189 are extracellular; the sequence is QAMTGQSTSMSGAECSAPFLSNPY. Residues 190–210 traverse the membrane as a helical segment; sequence VNMGMYVAYYWTTLVAMLILY. Over 211–633 the chain is Cytoplasmic; it reads KGIHQAAKNL…QTKAEKRAHK (423 aa). Disordered regions lie at residues 256–350, 381–403, 427–475, and 515–585; these read KEKA…SRRC, SRYSASESITTTHENDEKEVEKA, KNTD…KQAE, and LIRR…TDTF. Polar residues-rich tracts occupy residues 266 to 275 and 287 to 315; these read SGYTSNQAGD and PETSQFRVDPNSNNNLNVEGSLNTENDQN. Composition is skewed to basic and acidic residues over residues 320-333 and 393-403; these read EEERSGFLSRRESN and HENDEKEVEKA. The segment covering 429 to 439 has biased composition (low complexity); the sequence is TDSNNDSDTTS. Residues 444-457 are compositionally biased toward basic residues; the sequence is RSRKYKKNKRPRSS. The segment covering 557-571 has biased composition (polar residues); it reads LTVNNENRGETSSQP. Residues 634-656 traverse the membrane as a helical segment; that stretch reads AFRTITFIVGFFAILWSPYYIMA. At 657 to 670 the chain is on the extracellular side; the sequence is TVYGFCKGECIPSF. The helical transmembrane segment at 671 to 693 threads the bilayer; that stretch reads LYTLSYYMCYLNSSGNPFAYALA. The Cytoplasmic portion of the chain corresponds to 694–713; sequence NRQFRSAFMRMFRGNFNKVA.

This sequence belongs to the G-protein coupled receptor 1 family. Muscarinic acetylcholine receptor subfamily. In terms of tissue distribution, expressed in head region of the larva. In adults, expression is seen in the periventricularis magnocellularis (PVM) neuron.

The protein localises to the cell membrane. Functionally, the muscarinic acetylcholine receptor mediates various cellular responses, including inhibition of adenylate cyclase, breakdown of phosphoinositides and modulation of potassium channels through the action of G proteins. Primary transducing effect is Pi turnover. The polypeptide is Probable muscarinic acetylcholine receptor gar-1 (gar-1) (Caenorhabditis elegans).